We begin with the raw amino-acid sequence, 310 residues long: Tagatose-6-phosphate kinase (310 aa).

It belongs to the carbohydrate kinase PfkB family. LacC subfamily.

It carries out the reaction D-tagatofuranose 6-phosphate + ATP = D-tagatofuranose 1,6-bisphosphate + ADP + H(+). Its pathway is carbohydrate metabolism; D-tagatose 6-phosphate degradation; D-glyceraldehyde 3-phosphate and glycerone phosphate from D-tagatose 6-phosphate: step 1/2. This Staphylococcus aureus (strain MRSA252) protein is Tagatose-6-phosphate kinase.